Consider the following 110-residue polypeptide: Iron-sulfur cluster assembly protein CyaY (110 aa).

The protein belongs to the frataxin family.

Involved in iron-sulfur (Fe-S) cluster assembly. May act as a regulator of Fe-S biogenesis. In Pseudomonas entomophila (strain L48), this protein is Iron-sulfur cluster assembly protein CyaY.